The following is a 156-amino-acid chain: Small ribosomal subunit protein uS7 (156 aa).

Belongs to the universal ribosomal protein uS7 family. Part of the 30S ribosomal subunit. Contacts proteins S9 and S11.

In terms of biological role, one of the primary rRNA binding proteins, it binds directly to 16S rRNA where it nucleates assembly of the head domain of the 30S subunit. Is located at the subunit interface close to the decoding center, probably blocks exit of the E-site tRNA. This chain is Small ribosomal subunit protein uS7, found in Streptococcus equi subsp. equi (strain 4047).